A 449-amino-acid chain; its full sequence is Kynurenine 3-monooxygenase (449 aa).

The protein belongs to the aromatic-ring hydroxylase family. KMO subfamily. FAD serves as cofactor.

The catalysed reaction is L-kynurenine + NADPH + O2 + H(+) = 3-hydroxy-L-kynurenine + NADP(+) + H2O. Its pathway is cofactor biosynthesis; NAD(+) biosynthesis; quinolinate from L-kynurenine: step 1/3. Catalyzes the hydroxylation of L-kynurenine (L-Kyn) to form 3-hydroxy-L-kynurenine (L-3OHKyn). Required for synthesis of quinolinic acid. This is Kynurenine 3-monooxygenase from Legionella pneumophila (strain Corby).